Reading from the N-terminus, the 98-residue chain is Small ribosomal subunit protein bS20 (98 aa).

A compositionally biased stretch (basic residues) spans 1-12; sequence MAPRKPSKKVGP. The interval 1–31 is disordered; it reads MAPRKPSKKVGPQKRPSAEKRVITSKKKQLR.

This sequence belongs to the bacterial ribosomal protein bS20 family.

Functionally, binds directly to 16S ribosomal RNA. In Chlamydia trachomatis serovar A (strain ATCC VR-571B / DSM 19440 / HAR-13), this protein is Small ribosomal subunit protein bS20.